The following is a 381-amino-acid chain: MSRLQFQLQATDGHARRGRLTFPRGTVETPAFMPVGTYGSVKGILPEHIRALGAEIILGNTFHLYLRPGLDVIGDHGGLHGFARWDGPILTDSGGFQVFSLAHRRKITEQGVTFSSPTDGARVFLGPEESMKIQKVLDSDIVMIFDECTPYPATEDLARRSMELSLRWAQRSRDAHDGLGNDAALFGIVQGGVHPDLRSRSLDGLQSIGFDGYAIGGLAVGEPEHERNAMLEHLHPRLPAECPRYLMGVGRPEDLVEGVARGVDMFDCVMPTRNARNGHYFTSFGTVRIRNAKYERDLDTIEPGCGCHACSSGYTRSYLRHLDRCNEMLAPMLGTLHNLWYYEKLMADMRAAIASGTFVEFRRSFYAARGATTPPLPGETS.

Aspartate 92 (proton acceptor) is an active-site residue. Substrate contacts are provided by residues 92-96 (DSGGF), aspartate 146, glutamine 190, and glycine 217. Residues 248–254 (GVGRPED) form an RNA binding region. Residue aspartate 267 is the Nucleophile of the active site. The interval 272–276 (TRNAR) is RNA binding; important for wobble base 34 recognition. 4 residues coordinate Zn(2+): cysteine 305, cysteine 307, cysteine 310, and histidine 337.

The protein belongs to the queuine tRNA-ribosyltransferase family. In terms of assembly, homodimer. Within each dimer, one monomer is responsible for RNA recognition and catalysis, while the other monomer binds to the replacement base PreQ1. Zn(2+) serves as cofactor.

It catalyses the reaction 7-aminomethyl-7-carbaguanine + guanosine(34) in tRNA = 7-aminomethyl-7-carbaguanosine(34) in tRNA + guanine. It functions in the pathway tRNA modification; tRNA-queuosine biosynthesis. In terms of biological role, catalyzes the base-exchange of a guanine (G) residue with the queuine precursor 7-aminomethyl-7-deazaguanine (PreQ1) at position 34 (anticodon wobble position) in tRNAs with GU(N) anticodons (tRNA-Asp, -Asn, -His and -Tyr). Catalysis occurs through a double-displacement mechanism. The nucleophile active site attacks the C1' of nucleotide 34 to detach the guanine base from the RNA, forming a covalent enzyme-RNA intermediate. The proton acceptor active site deprotonates the incoming PreQ1, allowing a nucleophilic attack on the C1' of the ribose to form the product. After dissociation, two additional enzymatic reactions on the tRNA convert PreQ1 to queuine (Q), resulting in the hypermodified nucleoside queuosine (7-(((4,5-cis-dihydroxy-2-cyclopenten-1-yl)amino)methyl)-7-deazaguanosine). The chain is Queuine tRNA-ribosyltransferase from Xanthomonas oryzae pv. oryzae (strain MAFF 311018).